The chain runs to 544 residues: Chaperonin GroEL (544 aa).

Residues 30-33 (TLGP), Lys-51, 87-91 (DGTTT), Gly-415, and Asp-495 each bind ATP.

This sequence belongs to the chaperonin (HSP60) family. In terms of assembly, forms a cylinder of 14 subunits composed of two heptameric rings stacked back-to-back. Interacts with the co-chaperonin GroES.

Its subcellular location is the cytoplasm. The enzyme catalyses ATP + H2O + a folded polypeptide = ADP + phosphate + an unfolded polypeptide.. Functionally, together with its co-chaperonin GroES, plays an essential role in assisting protein folding. The GroEL-GroES system forms a nano-cage that allows encapsulation of the non-native substrate proteins and provides a physical environment optimized to promote and accelerate protein folding. This is Chaperonin GroEL from Neisseria meningitidis serogroup C (strain 053442).